The sequence spans 160 residues: Small ribosomal subunit protein uS17z (160 aa).

The protein belongs to the universal ribosomal protein uS17 family.

It is found in the cytoplasm. The chain is Small ribosomal subunit protein uS17z (RPS11A) from Arabidopsis thaliana (Mouse-ear cress).